A 236-amino-acid chain; its full sequence is Small ribosomal subunit protein uS2c (236 aa).

Belongs to the universal ribosomal protein uS2 family.

The protein localises to the plastid. The protein resides in the chloroplast. The polypeptide is Small ribosomal subunit protein uS2c (rps2) (Platanus occidentalis (Sycamore)).